Consider the following 270-residue polypeptide: tRNA pseudouridine synthase A (270 aa).

D52 serves as the catalytic Nucleophile. Y110 is a substrate binding site.

The protein belongs to the tRNA pseudouridine synthase TruA family. Homodimer.

It carries out the reaction uridine(38/39/40) in tRNA = pseudouridine(38/39/40) in tRNA. Its function is as follows. Formation of pseudouridine at positions 38, 39 and 40 in the anticodon stem and loop of transfer RNAs. In Paraburkholderia phytofirmans (strain DSM 17436 / LMG 22146 / PsJN) (Burkholderia phytofirmans), this protein is tRNA pseudouridine synthase A.